A 246-amino-acid chain; its full sequence is Adenosylcobinamide-GDP ribazoletransferase (246 aa).

Transmembrane regions (helical) follow at residues 34–54 (IVTF…VALL), 59–79 (CGVP…TGGF), 113–133 (GGLA…ELLL), 138–158 (PIAA…LLMY), 171–191 (LFIG…GVAL), and 194–214 (VLLG…IWGL).

It belongs to the CobS family. The cofactor is Mg(2+).

It is found in the cell inner membrane. It catalyses the reaction alpha-ribazole + adenosylcob(III)inamide-GDP = adenosylcob(III)alamin + GMP + H(+). It carries out the reaction alpha-ribazole 5'-phosphate + adenosylcob(III)inamide-GDP = adenosylcob(III)alamin 5'-phosphate + GMP + H(+). Its pathway is cofactor biosynthesis; adenosylcobalamin biosynthesis; adenosylcobalamin from cob(II)yrinate a,c-diamide: step 7/7. In terms of biological role, joins adenosylcobinamide-GDP and alpha-ribazole to generate adenosylcobalamin (Ado-cobalamin). Also synthesizes adenosylcobalamin 5'-phosphate from adenosylcobinamide-GDP and alpha-ribazole 5'-phosphate. The polypeptide is Adenosylcobinamide-GDP ribazoletransferase (Klebsiella pneumoniae (strain 342)).